The following is a 376-amino-acid chain: Succinate--CoA ligase [ADP-forming] subunit beta (376 aa).

An ATP-grasp domain is found at 9–234 (KAIAKKYGIP…ERELSELEKE (226 aa)). ATP contacts are provided by residues Lys-45, 52 to 54 (GRG), Glu-91, Glu-94, and Glu-99. Residues Asn-191 and Asp-204 each contribute to the Mg(2+) site. Substrate is bound by residues Asn-254 and 311–313 (GIT).

Belongs to the succinate/malate CoA ligase beta subunit family. In terms of assembly, heterotetramer of two alpha and two beta subunits. Mg(2+) is required as a cofactor.

It catalyses the reaction succinate + ATP + CoA = succinyl-CoA + ADP + phosphate. The catalysed reaction is GTP + succinate + CoA = succinyl-CoA + GDP + phosphate. The protein operates within carbohydrate metabolism; tricarboxylic acid cycle; succinate from succinyl-CoA (ligase route): step 1/1. Its function is as follows. Succinyl-CoA synthetase functions in the citric acid cycle (TCA), coupling the hydrolysis of succinyl-CoA to the synthesis of either ATP or GTP and thus represents the only step of substrate-level phosphorylation in the TCA. The beta subunit provides nucleotide specificity of the enzyme and binds the substrate succinate, while the binding sites for coenzyme A and phosphate are found in the alpha subunit. This is Succinate--CoA ligase [ADP-forming] subunit beta from Ignicoccus hospitalis (strain KIN4/I / DSM 18386 / JCM 14125).